The chain runs to 348 residues: Centromere protein N-A (348 aa).

The protein belongs to the CENP-N/CHL4 family.

It localises to the nucleus. The protein resides in the chromosome. Its subcellular location is the centromere. In terms of biological role, probable component of a centromeric complex involved in assembly of kinetochore proteins, mitotic progression and chromosome segregation. In Xenopus laevis (African clawed frog), this protein is Centromere protein N-A (cenpn-a).